The following is a 212-amino-acid chain: Holliday junction branch migration complex subunit RuvA (212 aa).

The segment at 1 to 66 (MISGLKGTLK…ERGQKLFGFL (66 aa)) is domain I. The domain II stretch occupies residues 67-145 (TEQDKEFFKV…KLELFLSGTS (79 aa)). A flexible linker region spans residues 146–162 (KEPSISLSSFSETPEEA). The tract at residues 163 to 212 (ALSRKREIAILGLVQLGFEEKTASKEVDKILKSSSPTDPGEIIREILKSL) is domain III.

Belongs to the RuvA family. Homotetramer. Forms an RuvA(8)-RuvB(12)-Holliday junction (HJ) complex. HJ DNA is sandwiched between 2 RuvA tetramers; dsDNA enters through RuvA and exits via RuvB. An RuvB hexamer assembles on each DNA strand where it exits the tetramer. Each RuvB hexamer is contacted by two RuvA subunits (via domain III) on 2 adjacent RuvB subunits; this complex drives branch migration. In the full resolvosome a probable DNA-RuvA(4)-RuvB(12)-RuvC(2) complex forms which resolves the HJ.

It localises to the cytoplasm. Functionally, the RuvA-RuvB-RuvC complex processes Holliday junction (HJ) DNA during genetic recombination and DNA repair, while the RuvA-RuvB complex plays an important role in the rescue of blocked DNA replication forks via replication fork reversal (RFR). RuvA specifically binds to HJ cruciform DNA, conferring on it an open structure. The RuvB hexamer acts as an ATP-dependent pump, pulling dsDNA into and through the RuvAB complex. HJ branch migration allows RuvC to scan DNA until it finds its consensus sequence, where it cleaves and resolves the cruciform DNA. This chain is Holliday junction branch migration complex subunit RuvA, found in Leptospira borgpetersenii serovar Hardjo-bovis (strain JB197).